The chain runs to 66 residues: MKKDIHPKLVECTVTCSCGNSFKNESQKSEMRIDICNECHPFFTGSERMVDTAGRIDKFKKRYAQN.

The Zn(2+) site is built by C16, C18, C36, and C39.

This sequence belongs to the bacterial ribosomal protein bL31 family. Type A subfamily. In terms of assembly, part of the 50S ribosomal subunit. Requires Zn(2+) as cofactor.

Binds the 23S rRNA. The chain is Large ribosomal subunit protein bL31 from Sulfurimonas denitrificans (strain ATCC 33889 / DSM 1251) (Thiomicrospira denitrificans (strain ATCC 33889 / DSM 1251)).